The sequence spans 418 residues: Putative ion-transport protein YfeO (418 aa).

Transmembrane regions (helical) follow at residues 10 to 30, 54 to 74, 99 to 119, 120 to 140, 149 to 169, 186 to 206, 223 to 243, 258 to 278, 300 to 320, 322 to 342, 343 to 363, and 371 to 391; these read LLLSLPAVAIGIASSLILIMV, DSPLWIIGVLTLTGIAVGLVI, ALPGLIVALILGLAGGVSLGP, EHPIMTVNIALAVAIGARLLP, ILASAGTIGALFGTPVAAALI, LFAPLMAAAAGALTTGLFFHP, ILSGAIVAAIAIAAGMVAVWC, VFVLGIGGLILGILGVIGGPV, DYFLLAVIKLAALVVAAASGF, GGRIFPAVFVGVALGLMLHEH, VPAVPAAITVSCAILGIVLVV, and LFMAAVVVPNTTLLPLLCIVM.

This sequence belongs to the chloride channel (TC 2.A.49) family.

Its subcellular location is the cell membrane. The protein is Putative ion-transport protein YfeO of Escherichia coli O45:K1 (strain S88 / ExPEC).